A 22-amino-acid chain; its full sequence is Lantibiotic mutacin B-Ny266 (22 aa).

A cross-link (lanthionine (Ser-Cys)) is located at residues serine 3 to cysteine 7. Serine 5 carries the 2,3-didehydroalanine (Ser) modification. The segment at residues threonine 8–cysteine 11 is a cross-link (beta-methyllanthionine (Thr-Cys)). Threonine 14 bears the 2,3-didehydrobutyrine mark. The lanthionine (Ser-Cys) cross-link spans serine 16 to cysteine 21. Positions serine 19 to cysteine 22 form a cross-link, S-(2-aminovinyl)-D-cysteine (Ser-Cys).

Maturation of lantibiotics involves the enzymatic conversion of Thr, and Ser into dehydrated AA and the formation of thioether bonds with cysteine. The C-terminal lanthionine undergoes decarboxylation. This is followed by membrane translocation and cleavage of the modified precursor. In terms of processing, it is not established whether the 2,3-didehydrobutyrine is the E- or Z-isomer.

Lanthionine-containing peptide antibiotic (lantibiotic) active on Gram-positive bacteria. The bactericidal activity of lantibiotics is based on depolarization of energized bacterial cytoplasmic membranes, initiated by the formation of aqueous transmembrane pores. This chain is Lantibiotic mutacin B-Ny266, found in Streptococcus mutans.